A 380-amino-acid polypeptide reads, in one-letter code: Apolipoprotein A-IV (380 aa).

A signal peptide spans 1–20 (MFLKAVVLSLALVAVTGAEA). 13 consecutive repeat copies span residues 33-54 (DYFS…KSEL), 60-81 (TLFQ…KKLV), 82-103 (PFAT…EEIR), 115-136 (PHAT…QRLG), 137-158 (PYAE…RQLT), 159-180 (PYVE…ASLA), 181-202 (PYAE…GRLT), 203-224 (PYAD…RSLA), 225-246 (PYAQ…FQMK), 247-268 (KHAE…QGLV), 269-286 (PLVN…EDLQ), 287-308 (KSLA…RTVG), and 309-330 (PYGE…QKLG). The segment at 33–330 (DYFSQLGNNA…QLDTLRQKLG (298 aa)) is 13 X 22 AA approximate tandem repeats. A disordered region spans residues 361 to 380 (KESQAPALPAQEEMPVPLGG).

The protein belongs to the apolipoprotein A1/A4/E family. As to quaternary structure, homodimer. Secreted in plasma.

The protein resides in the secreted. In terms of biological role, may have a role in chylomicrons and VLDL secretion and catabolism. Required for efficient activation of lipoprotein lipase by ApoC-II; potent activator of LCAT. Apoa-IV is a major component of HDL and chylomicrons. This Bos taurus (Bovine) protein is Apolipoprotein A-IV (APOA4).